We begin with the raw amino-acid sequence, 201 residues long: MDKFVKLTGVAAPLPVVNIDTDMIIPKDYLKTIKRTGLGTGLFAEARYNEDGSPNPDFVLNKPAYQNAKILVAGDNFGCGSSREHAPWALLDFGIRCVISTSFADIFYNNCFKNGILPIVVSQEDLDKLMDDASRGSNAVLTIDLEALEITGPDGGSIKFEVDAFKRHCLLNGLDDIGLTLEKGRSIDNFEKATAASRPWA.

This sequence belongs to the LeuD family. LeuD type 1 subfamily. In terms of assembly, heterodimer of LeuC and LeuD.

The catalysed reaction is (2R,3S)-3-isopropylmalate = (2S)-2-isopropylmalate. Its pathway is amino-acid biosynthesis; L-leucine biosynthesis; L-leucine from 3-methyl-2-oxobutanoate: step 2/4. Catalyzes the isomerization between 2-isopropylmalate and 3-isopropylmalate, via the formation of 2-isopropylmaleate. This Sinorhizobium medicae (strain WSM419) (Ensifer medicae) protein is 3-isopropylmalate dehydratase small subunit.